The sequence spans 221 residues: Riboflavin kinase (221 aa).

The segment at 1–89 (MENIYIALKT…ISSILRFSQE (89 aa)) is H-T-H motif-like. Residues 90 to 221 (LKLVGAVQDG…EVLASIDGKL (132 aa)) form a riboflavin kinase region. 99–104 (GLGEGK) provides a ligand contact to CDP. Mg(2+) is bound by residues T128 and N130. Residues S185 and E192 each contribute to the FMN site. Position 197-200 (197-200 (KYLR)) interacts with CDP.

This sequence belongs to the archaeal riboflavin kinase family. Mg(2+) serves as cofactor.

The enzyme catalyses riboflavin + CTP = CDP + FMN + H(+). The protein operates within cofactor biosynthesis; FMN biosynthesis; FMN from riboflavin (CTP route): step 1/1. In terms of biological role, catalyzes the CTP-dependent phosphorylation of riboflavin (vitamin B2) to form flavin mononucleotide (FMN). This is Riboflavin kinase (ribK) from Picrophilus torridus (strain ATCC 700027 / DSM 9790 / JCM 10055 / NBRC 100828 / KAW 2/3).